The chain runs to 336 residues: Fructose-1,6-bisphosphatase class 1 (336 aa).

Glu-92, Asp-115, Leu-117, and Asp-118 together coordinate Mg(2+). Substrate is bound by residues 118-121 (DGSS), Asn-211, Tyr-244, 262-264 (YLY), and Lys-274. Glu-280 lines the Mg(2+) pocket.

Belongs to the FBPase class 1 family. In terms of assembly, homotetramer. Mg(2+) is required as a cofactor.

The protein localises to the cytoplasm. It carries out the reaction beta-D-fructose 1,6-bisphosphate + H2O = beta-D-fructose 6-phosphate + phosphate. Its pathway is carbohydrate biosynthesis; gluconeogenesis. The polypeptide is Fructose-1,6-bisphosphatase class 1 (Vibrio cholerae serotype O1 (strain ATCC 39315 / El Tor Inaba N16961)).